Consider the following 448-residue polypeptide: Adenylosuccinate synthetase 1 (448 aa).

GTP contacts are provided by residues 22–28 (GDEGKGK) and 50–52 (GHT). Residue Asp-23 is the Proton acceptor of the active site. Residues Asp-23 and Gly-50 each coordinate Mg(2+). IMP contacts are provided by residues 23–26 (DEGK), 48–51 (NAGH), Thr-139, Arg-153, Gln-234, Thr-249, and Arg-321. The active-site Proton donor is His-51. 317 to 323 (SVTGRPR) contacts substrate. GTP contacts are provided by residues Arg-323, 349 to 351 (KLD), and 431 to 433 (STG).

Belongs to the adenylosuccinate synthetase family. In terms of assembly, homodimer. It depends on Mg(2+) as a cofactor.

The protein localises to the cytoplasm. It catalyses the reaction IMP + L-aspartate + GTP = N(6)-(1,2-dicarboxyethyl)-AMP + GDP + phosphate + 2 H(+). Its pathway is purine metabolism; AMP biosynthesis via de novo pathway; AMP from IMP: step 1/2. Plays an important role in the de novo pathway of purine nucleotide biosynthesis. Catalyzes the first committed step in the biosynthesis of AMP from IMP. This chain is Adenylosuccinate synthetase 1, found in Burkholderia lata (strain ATCC 17760 / DSM 23089 / LMG 22485 / NCIMB 9086 / R18194 / 383).